A 144-amino-acid polypeptide reads, in one-letter code: SVVKSEDYTLQSYVDRRDYPLPDVAHVRHLSASQKALKEKEKASWSSLSMDEKVELYRIQFKESFAEMNRGSNEWKTVVGAAMFFIGFTAILIMLEKRYVYGPLPHTFDKEWVAMQTKRMLDLKVNPVDGLASKWDYEKKEWKK.

Residues 1-73 (SVVKSEDYTL…SFAEMNRGSN (73 aa)) are Mitochondrial matrix-facing. Position 4 is an N6-acetyllysine; alternate (K4). N6-succinyllysine; alternate is present on K4. Phosphoserine is present on residues S31 and S33. K35 bears the N6-acetyllysine; alternate mark. An N6-succinyllysine; alternate modification is found at K35. An N6-acetyllysine modification is found at K42. The chain crosses the membrane as a helical span at residues 74–99 (EWKTVVGAAMFFIGFTAILIMLEKRY). Topologically, residues 100–144 (VYGPLPHTFDKEWVAMQTKRMLDLKVNPVDGLASKWDYEKKEWKK) are mitochondrial intermembrane.

It belongs to the cytochrome c oxidase IV family. Component of the cytochrome c oxidase (complex IV, CIV), a multisubunit enzyme composed of 14 subunits. The complex is composed of a catalytic core of 3 subunits MT-CO1, MT-CO2 and MT-CO3, encoded in the mitochondrial DNA, and 11 supernumerary subunits COX4I, COX5A, COX5B, COX6A, COX6B, COX6C, COX7A, COX7B, COX7C, COX8 and NDUFA4, which are encoded in the nuclear genome. The complex exists as a monomer or a dimer and forms supercomplexes (SCs) in the inner mitochondrial membrane with NADH-ubiquinone oxidoreductase (complex I, CI) and ubiquinol-cytochrome c oxidoreductase (cytochrome b-c1 complex, complex III, CIII), resulting in different assemblies (supercomplex SCI(1)III(2)IV(1) and megacomplex MCI(2)III(2)IV(2)). Interacts with PHB2; the interaction decreases in absence of SPHK2. Interacts with AFG1L. Interacts with ABCB7; this interaction allows the regulation of cellular iron homeostasis and cellular reactive oxygen species (ROS) levels in cardiomyocytes. Interacts with FLVCR2; this interaction occurs in the absence of heme and is disrupted upon heme binding. Interacts with IRGC.

It localises to the mitochondrion inner membrane. The protein operates within energy metabolism; oxidative phosphorylation. Its function is as follows. Component of the cytochrome c oxidase, the last enzyme in the mitochondrial electron transport chain which drives oxidative phosphorylation. The respiratory chain contains 3 multisubunit complexes succinate dehydrogenase (complex II, CII), ubiquinol-cytochrome c oxidoreductase (cytochrome b-c1 complex, complex III, CIII) and cytochrome c oxidase (complex IV, CIV), that cooperate to transfer electrons derived from NADH and succinate to molecular oxygen, creating an electrochemical gradient over the inner membrane that drives transmembrane transport and the ATP synthase. Cytochrome c oxidase is the component of the respiratory chain that catalyzes the reduction of oxygen to water. Electrons originating from reduced cytochrome c in the intermembrane space (IMS) are transferred via the dinuclear copper A center (CU(A)) of subunit 2 and heme A of subunit 1 to the active site in subunit 1, a binuclear center (BNC) formed by heme A3 and copper B (CU(B)). The BNC reduces molecular oxygen to 2 water molecules using 4 electrons from cytochrome c in the IMS and 4 protons from the mitochondrial matrix. This chain is Cytochrome c oxidase subunit 4 isoform 1, mitochondrial (COX4I1), found in Pithecia pithecia (White-faced saki).